The following is a 233-amino-acid chain: 2-C-methyl-D-erythritol 4-phosphate cytidylyltransferase (233 aa).

This sequence belongs to the IspD/TarI cytidylyltransferase family. IspD subfamily.

It carries out the reaction 2-C-methyl-D-erythritol 4-phosphate + CTP + H(+) = 4-CDP-2-C-methyl-D-erythritol + diphosphate. The protein operates within isoprenoid biosynthesis; isopentenyl diphosphate biosynthesis via DXP pathway; isopentenyl diphosphate from 1-deoxy-D-xylulose 5-phosphate: step 2/6. Its function is as follows. Catalyzes the formation of 4-diphosphocytidyl-2-C-methyl-D-erythritol from CTP and 2-C-methyl-D-erythritol 4-phosphate (MEP). This Gloeobacter violaceus (strain ATCC 29082 / PCC 7421) protein is 2-C-methyl-D-erythritol 4-phosphate cytidylyltransferase.